The sequence spans 295 residues: GTPase Era (295 aa).

The Era-type G domain maps to 3–171; that stretch reads KSGFITVIGR…LELMKKYLPE (169 aa). A G1 region spans residues 11 to 18; that stretch reads GRPNVGKS. 11–18 lines the GTP pocket; that stretch reads GRPNVGKS. Positions 37–41 are G2; sequence QTTRN. The interval 58-61 is G3; it reads DTPG. GTP-binding positions include 58 to 62 and 120 to 123; these read DTPGM and NKID. Residues 120 to 123 are G4; that stretch reads NKID. The interval 150 to 152 is G5; sequence ISA. One can recognise a KH type-2 domain in the interval 202–279; sequence LSEEVPHGIA…SLKVWVKVKK (78 aa).

This sequence belongs to the TRAFAC class TrmE-Era-EngA-EngB-Septin-like GTPase superfamily. Era GTPase family. As to quaternary structure, monomer.

The protein localises to the cytoplasm. It localises to the cell membrane. Functionally, an essential GTPase that binds both GDP and GTP, with rapid nucleotide exchange. Plays a role in 16S rRNA processing and 30S ribosomal subunit biogenesis and possibly also in cell cycle regulation and energy metabolism. This chain is GTPase Era, found in Clostridium tetani (strain Massachusetts / E88).